We begin with the raw amino-acid sequence, 65 residues long: Double gene block protein 1 (65 aa).

Residues 1-41 (MDSQRTVELTNPRGRSKERGDSGGKQKNSMGRKIANDAISE) form a disordered region. Basic and acidic residues predominate over residues 15–24 (RSKERGDSGG). An RNA-binding region spans residues 17-43 (KERGDSGGKQKNSMGRKIANDAISESK).

The protein belongs to the carmovirus double gene block protein 1 family. As to quaternary structure, homodimer.

In terms of biological role, cell-to-cell movement. Displays RNA-binding activity. The sequence is that of Double gene block protein 1 from Melon necrotic spot virus (MNSV).